Here is a 133-residue protein sequence, read N- to C-terminus: ATP synthase epsilon chain (133 aa).

This sequence belongs to the ATPase epsilon chain family. F-type ATPases have 2 components, CF(1) - the catalytic core - and CF(0) - the membrane proton channel. CF(1) has five subunits: alpha(3), beta(3), gamma(1), delta(1), epsilon(1). CF(0) has three main subunits: a, b and c.

The protein resides in the cell membrane. In terms of biological role, produces ATP from ADP in the presence of a proton gradient across the membrane. The protein is ATP synthase epsilon chain of Clostridium botulinum (strain ATCC 19397 / Type A).